The following is a 486-amino-acid chain: Protein nucleotidyltransferase YdiU (486 aa).

ATP contacts are provided by Gly-90, Gly-92, Arg-93, Lys-113, Asp-125, Gly-126, Arg-176, and Arg-183. Asp-252 serves as the catalytic Proton acceptor. Asn-253 and Asp-262 together coordinate Mg(2+). An ATP-binding site is contributed by Asp-262.

It belongs to the SELO family. Mg(2+) serves as cofactor. Requires Mn(2+) as cofactor.

It catalyses the reaction L-seryl-[protein] + ATP = 3-O-(5'-adenylyl)-L-seryl-[protein] + diphosphate. The enzyme catalyses L-threonyl-[protein] + ATP = 3-O-(5'-adenylyl)-L-threonyl-[protein] + diphosphate. The catalysed reaction is L-tyrosyl-[protein] + ATP = O-(5'-adenylyl)-L-tyrosyl-[protein] + diphosphate. It carries out the reaction L-histidyl-[protein] + UTP = N(tele)-(5'-uridylyl)-L-histidyl-[protein] + diphosphate. It catalyses the reaction L-seryl-[protein] + UTP = O-(5'-uridylyl)-L-seryl-[protein] + diphosphate. The enzyme catalyses L-tyrosyl-[protein] + UTP = O-(5'-uridylyl)-L-tyrosyl-[protein] + diphosphate. Its function is as follows. Nucleotidyltransferase involved in the post-translational modification of proteins. It can catalyze the addition of adenosine monophosphate (AMP) or uridine monophosphate (UMP) to a protein, resulting in modifications known as AMPylation and UMPylation. In Pseudomonas aeruginosa (strain ATCC 15692 / DSM 22644 / CIP 104116 / JCM 14847 / LMG 12228 / 1C / PRS 101 / PAO1), this protein is Protein nucleotidyltransferase YdiU.